Consider the following 408-residue polypeptide: tRNA(Met) cytidine acetate ligase (408 aa).

Residues 7-20 (IVEY…HKYH), glycine 102, asparagine 170, and 195-196 (RI) contribute to the ATP site.

It belongs to the TmcAL family.

The protein localises to the cytoplasm. The catalysed reaction is cytidine(34) in elongator tRNA(Met) + acetate + ATP = N(4)-acetylcytidine(34) in elongator tRNA(Met) + AMP + diphosphate. Its function is as follows. Catalyzes the formation of N(4)-acetylcytidine (ac(4)C) at the wobble position of elongator tRNA(Met), using acetate and ATP as substrates. First activates an acetate ion to form acetyladenylate (Ac-AMP) and then transfers the acetyl group to tRNA to form ac(4)C34. The chain is tRNA(Met) cytidine acetate ligase from Clostridium kluyveri (strain NBRC 12016).